We begin with the raw amino-acid sequence, 297 residues long: Ribosomal RNA small subunit methyltransferase H (297 aa).

Residues 30–32, D48, F75, D96, and Q103 contribute to the S-adenosyl-L-methionine site; that span reads GGY.

It belongs to the methyltransferase superfamily. RsmH family.

The protein resides in the cytoplasm. It carries out the reaction cytidine(1402) in 16S rRNA + S-adenosyl-L-methionine = N(4)-methylcytidine(1402) in 16S rRNA + S-adenosyl-L-homocysteine + H(+). Specifically methylates the N4 position of cytidine in position 1402 (C1402) of 16S rRNA. This Ehrlichia chaffeensis (strain ATCC CRL-10679 / Arkansas) protein is Ribosomal RNA small subunit methyltransferase H.